We begin with the raw amino-acid sequence, 290 residues long: Arylamine N-acetyltransferase 2 (290 aa).

The active-site Acyl-thioester intermediate is the Cys-68. Thr-103 and Gly-104 together coordinate CoA. 106 to 107 (IH) is a binding site for substrate. Residues His-107 and Asp-122 contribute to the active site. CoA is bound by residues Tyr-208, Thr-214, and Ser-287.

It belongs to the arylamine N-acetyltransferase family.

It localises to the cytoplasm. It catalyses the reaction an arylamine + acetyl-CoA = an N-acetylarylamine + CoA. The catalysed reaction is an N-hydroxyarylamine + acetyl-CoA = an N-acetoxyarylamine + CoA. In terms of biological role, catalyzes the N- or O-acetylation of various arylamine and heterocyclic amine substrates, and participates in the detoxification of a plethora of hydrazine and arylamine drugs. This Macaca mulatta (Rhesus macaque) protein is Arylamine N-acetyltransferase 2 (NAT2).